The sequence spans 151 residues: Superoxide dismutase [Cu-Zn] 2 (151 aa).

Residues His44, His46, and His61 each contribute to the Cu cation site. A disulfide bond links Cys55 and Cys144. His61, His69, His78, and Asp81 together coordinate Zn(2+). His118 is a Cu cation binding site.

It belongs to the Cu-Zn superoxide dismutase family. In terms of assembly, homodimer. Cu cation serves as cofactor. It depends on Zn(2+) as a cofactor.

Its subcellular location is the cytoplasm. The catalysed reaction is 2 superoxide + 2 H(+) = H2O2 + O2. Functionally, destroys radicals which are normally produced within the cells and which are toxic to biological systems. This chain is Superoxide dismutase [Cu-Zn] 2 (SODCC.1), found in Zea mays (Maize).